We begin with the raw amino-acid sequence, 809 residues long: MSRILFILLLLIVTQLSELQAAAFSVRQNRFDEVPDLQTPAPLATSTESSKKPEKATSGLLKKCLPCSDGIRCVPQIQCPAHVRMESHEKPQICDLPAGKFGYCCETGQNHTAPKPETSPKERRSGFPTILSPAVLDEARRNFEHLMHGVAQIPVRRGFPDFAHGLVFHSTAKDDLHNFAISNSAIEQVMTTQLFGKKEQVPVEDFITNNVPIKFTETPLAHHCQPPPVCGNIRSVYRSMDGTCNNPEPQRSLWGAAGQPMERMLPPAYEDGIWTPRAHSSDGTPLLGARKISRTLLSDVDRPHPKYNLMVMQFGQVLAHDISQTSSIRLEDGSLVQCCSPEGKVALSPQQSHFACMPIHVEPDDEFFSAFGVRCLNFVRLSLVPSPDCQLSYGKQLTKVTHFVDASPVYGSSDEASRSLRAFRGGRLRMMNDFGRDLLPLTNDKKACPSEEAGKSCFHSGDGRTNQIISLITLQILLAREHNRVAGALHELNPSASDETLFQEARRIVIAEMQHITYNEFLPIIIGPQQMKRFRLVPLHQGYSHDYNVNVNPAITNEFSGAAYRMGHSSVDGKFQIRQEHGRIDEVVNIPDVMFNPSRMRKREFYDDMLRTLYSQPMQQVDSSISQGLSRFLFRGDNPFGLDLAAINIQRGRDQGLRSYNDYLELMGAPKLHSFEQFPIEIAQKLSRVYRTPDDIDLWVGGLLEKAVEGGVVGVTFAEIIADQFARFKQGDRYYYEYDNGINPGAFNPLQLQEIRKVTLARLLCDNSDRLTLQAVPLAAFVRADHPGNQMIGCDDPNLPSVNLEAWRA.

Residues 1 to 21 (MSRILFILLLLIVTQLSELQA) form the signal peptide. Positions 22-223 (AAFSVRQNRF…KFTETPLAHH (202 aa)) are excised as a propeptide. Residues 36-55 (DLQTPAPLATSTESSKKPEK) are disordered. An N-linked (GlcNAc...) asparagine glycan is attached at N110. Position 224 is an N-acetylcysteine; in Chorion peroxidase light chain (C224). C230 and C244 are joined by a disulfide. H320 acts as the Proton acceptor in catalysis. C448 and C457 are disulfide-bonded. H568 contributes to the heme b binding site. C765 and C794 form a disulfide bridge.

Belongs to the peroxidase family. XPO subfamily. In terms of assembly, heterodimer. It depends on heme b as a cofactor. As to expression, expressed at low levels in the germarium and early follicles. Expression becomes progressively stronger during vitellogenesis, and is highly expressed in germ cells and somatic cells. A subset of follicle cells, termed border cells (BC), exhibit a high level of expression.

It localises to the secreted. It carries out the reaction 2 a phenolic donor + H2O2 = 2 a phenolic radical donor + 2 H2O. In terms of biological role, required for ovarian follicle maturation. Involved in the formation of a rigid and insoluble egg chorion by catalyzing chorion protein cross-linking through dityrosine formation and phenol oxidase-catalyzed chorion melanization. This chain is Chorion peroxidase (Pxt), found in Drosophila melanogaster (Fruit fly).